Consider the following 239-residue polypeptide: Purine nucleoside phosphorylase DeoD-type (239 aa).

Histidine 5 is an a purine D-ribonucleoside binding site. Glycine 21 and arginine 25 together coordinate phosphate. Lysine 27 carries the N6-acetyllysine modification. Residues arginine 44 and 88 to 91 (RVGS) contribute to the phosphate site. Residues 180-182 (EME) and 204-205 (SD) contribute to the a purine D-ribonucleoside site. Catalysis depends on aspartate 205, which acts as the Proton donor.

This sequence belongs to the PNP/UDP phosphorylase family. Homohexamer; trimer of homodimers.

It catalyses the reaction a purine D-ribonucleoside + phosphate = a purine nucleobase + alpha-D-ribose 1-phosphate. The enzyme catalyses a purine 2'-deoxy-D-ribonucleoside + phosphate = a purine nucleobase + 2-deoxy-alpha-D-ribose 1-phosphate. In terms of biological role, catalyzes the reversible phosphorolytic breakdown of the N-glycosidic bond in the beta-(deoxy)ribonucleoside molecules, with the formation of the corresponding free purine bases and pentose-1-phosphate. This chain is Purine nucleoside phosphorylase DeoD-type, found in Escherichia coli O81 (strain ED1a).